Here is a 710-residue protein sequence, read N- to C-terminus: Low-temperature-induced 78 kDa protein (710 aa).

Disordered stretches follow at residues 1–198 (MDQT…LDGQ), 225–269 (YQSK…RDLS), and 305–507 (GFGD…STYT). Positions 14–25 (QHPEEVEHHENG) are enriched in basic and acidic residues. Basic residues predominate over residues 29 to 41 (MFRKVKARAKKFK). Residues 49–58 (QSNEHEQDHD) are compositionally biased toward basic and acidic residues. Positions 59–73 (LVEEDDDDDELEPEV) are enriched in acidic residues. The segment covering 138–168 (SDKEEKRDVPIHHPLSELSDREESRETHHES) has biased composition (basic and acidic residues). Polar residues predominate over residues 169 to 187 (LNTPVSLLSGTEDVTSTFA). 5 consecutive repeat copies span residues 303–316 (PVGF…ELEK), 317–331 (DFPT…KTET), 336–350 (NSPS…KTES), 357–370 (PMGF…ELEK), and 398–412 (NFPV…KNES). The tract at residues 303-370 (PVGFGDESGA…GSESGAELEK (68 aa)) is 2 X 14 AA repeats of P-[MV]-G-F-G-[DS]-E-S-G-A-E-L-E-K. Basic and acidic residues-rich tracts occupy residues 313 to 331 (ELEK…KTET), 340 to 352 (RSHE…ESGN), 367 to 380 (ELEK…DSGR), 402 to 418 (RSHE…DKDV), 442 to 466 (EDKF…KTET), and 475 to 487 (SHPK…KESR). The segment at 317–412 (DFPTRSHDFD…SHELDLKNES (96 aa)) is 3 X 15 AA repeats of [DN]-[FS]-P-[STV]-R-S-H-[DE]-[FL]-D-[LM]-K-[NT]-E-[ST]. A run of 3 repeats spans residues 510–514 (FASML), 532–536 (VDEKL), and 550–554 (VTTKL). Residues 510-600 (FASMLGYSGE…AFSDMVAEKL (91 aa)) form a 5 X 5 AA repeats of [FV]-[ADT]-[EST]-[KM]-L region. A disordered region spans residues 537 to 577 (TPVNEKDQETESAVTTKLPISGGGSGVEEQRGEDKSVSGRD). Basic and acidic residues predominate over residues 564–577 (EEQRGEDKSVSGRD). Repeat copies occupy residues 579-583 (VAEKL) and 596-600 (VAEKL). Positions 601-710 (QIGGEEEKKE…STVVPVQKEL (110 aa)) are disordered. Residues 605–626 (EEEKKETTTKEVEKISTEKAAS) are compositionally biased toward basic and acidic residues. S626 carries the post-translational modification Phosphoserine. Residues 638–654 (GGGGMVGRIKGWFGGGA) show a composition bias toward gly residues. 2 repeat units span residues 648–670 (GWFG…EEAP) and 674–696 (GWFG…EESP). Positions 648 to 696 (GWFGGGATDEVKPESPHSVEEAPKSSGWFGGGATEEVKPKSPHSVEESP) are 2 X 23 AA repeats. Composition is skewed to basic and acidic residues over residues 656–670 (DEVK…EEAP) and 682–693 (EEVKPKSPHSVE).

The protein belongs to the LTI78/LTI65 family. As to expression, accumulates rapidly in leaves, stems, roots, flower petals, filaments, and sepals during cold-acclimation.

It localises to the cytoplasm. Functionally, involved in responses to abiotic stresses. Regulates probably root elongation in cold conditions. The protein is Low-temperature-induced 78 kDa protein of Arabidopsis thaliana (Mouse-ear cress).